Reading from the N-terminus, the 678-residue chain is Methionine--tRNA ligase (678 aa).

The short motif at 14–24 is the 'HIGH' region element; it reads PYANGSIHLGH. Zn(2+) contacts are provided by Cys-145, Cys-148, Cys-158, and Cys-161. The 'KMSKS' region motif lies at 331 to 335; it reads KMSKS. Residue Lys-334 participates in ATP binding. The tRNA-binding domain maps to 576–678; it reads AFAAVDLRIA…SGAKPGQRVK (103 aa).

The protein belongs to the class-I aminoacyl-tRNA synthetase family. MetG type 1 subfamily. As to quaternary structure, homodimer. The cofactor is Zn(2+).

The protein localises to the cytoplasm. The enzyme catalyses tRNA(Met) + L-methionine + ATP = L-methionyl-tRNA(Met) + AMP + diphosphate. In terms of biological role, is required not only for elongation of protein synthesis but also for the initiation of all mRNA translation through initiator tRNA(fMet) aminoacylation. This chain is Methionine--tRNA ligase, found in Ectopseudomonas mendocina (strain ymp) (Pseudomonas mendocina).